The chain runs to 564 residues: 5-aminolevulinate synthase, mitochondrial (564 aa).

The N-terminal 57 residues, 1–57, are a transit peptide targeting the mitochondrion; sequence MESITKVSMSVCPFVRSTSTQALRQLSQTSGALANQARQCPIAGNAIRAKEISIRSY. Substrate is bound by residues Arg-113, Ser-226, and Lys-245. Residues Ser-278, His-306, and Thr-350 each coordinate pyridoxal 5'-phosphate. Lys-353 is an active-site residue. Lys-353 is subject to N6-(pyridoxal phosphate)lysine. Pyridoxal 5'-phosphate-binding residues include Thr-382 and Thr-383. Thr-468 is a binding site for substrate.

The protein belongs to the class-II pyridoxal-phosphate-dependent aminotransferase family. As to quaternary structure, homodimer. Pyridoxal 5'-phosphate serves as cofactor.

It is found in the mitochondrion matrix. The catalysed reaction is succinyl-CoA + glycine + H(+) = 5-aminolevulinate + CO2 + CoA. It functions in the pathway porphyrin-containing compound metabolism; protoporphyrin-IX biosynthesis; 5-aminolevulinate from glycine: step 1/1. Catalyzes the synthesis of 5-aminolevulinate (ALA) from succinyl-CoA and glycine, the first and rate-limiting step in heme biosynthesis. The chain is 5-aminolevulinate synthase, mitochondrial (HEM1) from Candida albicans (strain SC5314 / ATCC MYA-2876) (Yeast).